The following is a 429-amino-acid chain: Glucose-1-phosphate adenylyltransferase (429 aa).

Alpha-D-glucose 1-phosphate contacts are provided by residues Gly162, 177–178, and Ser209; that span reads EK.

Belongs to the bacterial/plant glucose-1-phosphate adenylyltransferase family. Homotetramer.

It catalyses the reaction alpha-D-glucose 1-phosphate + ATP + H(+) = ADP-alpha-D-glucose + diphosphate. It participates in glycan biosynthesis; glycogen biosynthesis. In terms of biological role, involved in the biosynthesis of ADP-glucose, a building block required for the elongation reactions to produce glycogen. Catalyzes the reaction between ATP and alpha-D-glucose 1-phosphate (G1P) to produce pyrophosphate and ADP-Glc. The chain is Glucose-1-phosphate adenylyltransferase from Cyanothece sp. (strain PCC 7425 / ATCC 29141).